The following is a 209-amino-acid chain: Floral homeotic protein GLOBOSA (209 aa).

One can recognise an MADS-box domain in the interval 3–57; that stretch reads RGKIEIKRIENSSNRQVTYSKRRNGILKKAKEISVLCDARVSVIIFASSGKMHEF. The K-box domain maps to 82–173; the sequence is HENLDNEINK…QLEIASMNRN (92 aa).

Expressed mainly in floral organs and, within the flower, expression is restricted to petals and stamens.

It localises to the nucleus. Transcription factor involved in the genetic control of flower development. Acts in conjunction with DEFICIENS (defA). This is Floral homeotic protein GLOBOSA (GLO) from Nicotiana tabacum (Common tobacco).